A 367-amino-acid polypeptide reads, in one-letter code: Popeye domain-containing protein 2 (367 aa).

Asparagine 4 carries N-linked (GlcNAc...) asparagine glycosylation. Transmembrane regions (helical) follow at residues 36 to 56 and 77 to 97; these read FLLMGFMAGSGVYGCFYLFGI and IVLWNVLLTVACLLQLAQLVY. Disordered stretches follow at residues 273 to 292 and 312 to 367; these read PSASDGEPESEKDDEEALEA and APPA…TPEL. A compositionally biased stretch (acidic residues) spans 278-290; that stretch reads GEPESEKDDEEAL. Polar residues predominate over residues 344–356; it reads PLQNSSQVMSRSQ. Asparagine 347 is a glycosylation site (N-linked (GlcNAc...) asparagine). Threonine 364 is modified (phosphothreonine).

Belongs to the popeye family. In terms of tissue distribution, expressed in the developing and adult heart, with high expression levels in the sinus and atrioventricular nodes. Also expressed in the bladder and skeletal muscle.

The protein resides in the membrane. It localises to the cell membrane. Its subcellular location is the sarcolemma. Important for the maintenance of cardiac function. Plays a regulatory function in heart rate dynamics mediated, at least in part, through cAMP-binding and, probably, by increasing cell surface expression of the potassium channel KCNK2 and enhancing current density. The protein is Popeye domain-containing protein 2 (Popdc2) of Mus musculus (Mouse).